A 480-amino-acid polypeptide reads, in one-letter code: Sestrin-2 (480 aa).

At M1 the chain carries N-acetylmethionine. The tract at residues 20–45 (PGGVGDSGPGEEQRESRARRGPRGPS) is disordered. Residues 66–239 (GLEALMSSGR…APTPPSEQSS (174 aa)) form an N-terminal domain; mediates the alkylhydroperoxide reductase activity region. C125 serves as the catalytic Cysteine sulfenic acid (-SOH) intermediate. K175 is covalently cross-linked (Glycyl lysine isopeptide (Lys-Gly) (interchain with G-Cter in ubiquitin)). The disordered stretch occupies residues 222–252 (ADGSPAPQAPTPPSEQSSPPSRDPLNNSGGF). Residue S249 is modified to Phosphoserine. The interval 308–480 (PHPDMLCFVE…ALRAITRYMT (173 aa)) is C-terminal domain; mediates TORC1 regulation. Residues 374 to 377 (TYNT), T386, and E451 each bind L-leucine.

It belongs to the sestrin family. In terms of assembly, interacts with the GATOR2 complex which is composed of MIOS, SEC13, SEH1L, WDR24 and WDR59; the interaction is negatively regulated by leucine. Conveys leucine availability via direct interaction with SEH1L and WDR24 components of the GATOR2 complex. Interacts with RRAGA, RRAGB, RRAGC and RRAGD; may function as a guanine nucleotide dissociation inhibitor for RRAGs and regulate them. May interact with the TORC2 complex. Interacts with KEAP1, RBX1, SQSTM and ULK1; to regulate the degradation of KEAP1. May also associate with the complex composed of TSC1, TSC2 and the AMP-responsive protein kinase/AMPK to regulate TORC1 signaling. May interact with PRDX1. Phosphorylated by ULK1 at multiple sites. In terms of processing, ubiquitinated at Lys-175 by RNF167 via 'Lys-63'-linked polyubiquitination in response to leucine deprivation: ubiquitination promotes SESN2-interaction with the GATOR2 complex, leading to inhibit the TORC1 signaling pathway. Deubiquitinated at Lys-175 by STAMBPL1, promoting the TORC1 signaling pathway. Ubiquitinated by RNF186; ubiquitination mediates proteasomal degradation.

It localises to the cytoplasm. The enzyme catalyses a hydroperoxide + L-cysteinyl-[protein] = S-hydroxy-L-cysteinyl-[protein] + an alcohol. Its function is as follows. Functions as an intracellular leucine sensor that negatively regulates the mTORC1 signaling pathway through the GATOR complex. In absence of leucine, binds the GATOR subcomplex GATOR2 and prevents mTORC1 signaling. Binding of leucine to SESN2 disrupts its interaction with GATOR2 thereby activating the TORC1 signaling pathway. This stress-inducible metabolic regulator also plays a role in protection against oxidative and genotoxic stresses. May negatively regulate protein translation in response to endoplasmic reticulum stress, via mTORC1. May positively regulate the transcription by NFE2L2 of genes involved in the response to oxidative stress by facilitating the SQSTM1-mediated autophagic degradation of KEAP1. May also mediate TP53 inhibition of TORC1 signaling upon genotoxic stress. Moreover, may prevent the accumulation of reactive oxygen species (ROS) through the alkylhydroperoxide reductase activity born by the N-terminal domain of the protein. Was originally reported to contribute to oxidative stress resistance by reducing PRDX1. However, this could not be confirmed. The polypeptide is Sestrin-2 (Pongo abelii (Sumatran orangutan)).